We begin with the raw amino-acid sequence, 89 residues long: Heat shock protein 30A (89 aa).

2 stretches are compositionally biased toward basic and acidic residues: residues 1–11 and 19–39; these read MRNNVERRMQR and LSKD…RESE. The tract at residues 1–55 is disordered; sequence MRNNVERRMQRVNEACRLLSKDTEMRRITDQNRQSRESEGTSPNSGKDGKDHFEL. One can recognise a sHSP domain in the interval 35 to 89; it reads SRESEGTSPNSGKDGKDHFELTLNVRDFSPHELTVKTQGRRVIVTGKHERKSDTE.

The protein belongs to the small heat shock protein (HSP20) family.

In Xenopus laevis (African clawed frog), this protein is Heat shock protein 30A (hsp30a).